The following is a 226-amino-acid chain: UPF0758 protein M28_Spy0816 (226 aa).

The MPN domain maps to 103–225 (SVLTSVQVAE…YYSFREKSTL (123 aa)). 3 residues coordinate Zn(2+): histidine 174, histidine 176, and aspartate 187. Residues 174-187 (HNHPSGNIEPSSND) carry the JAMM motif motif.

This sequence belongs to the UPF0758 family.

The sequence is that of UPF0758 protein M28_Spy0816 from Streptococcus pyogenes serotype M28 (strain MGAS6180).